Consider the following 102-residue polypeptide: Large ribosomal subunit protein bL21 (102 aa).

It belongs to the bacterial ribosomal protein bL21 family. In terms of assembly, part of the 50S ribosomal subunit. Contacts protein L20.

Its function is as follows. This protein binds to 23S rRNA in the presence of protein L20. The sequence is that of Large ribosomal subunit protein bL21 from Saccharopolyspora erythraea (strain ATCC 11635 / DSM 40517 / JCM 4748 / NBRC 13426 / NCIMB 8594 / NRRL 2338).